Here is a 255-residue protein sequence, read N- to C-terminus: NAD kinase (255 aa).

Residue D44 is the Proton acceptor of the active site. NAD(+)-binding positions include 44–45 (DG), H49, 114–115 (NE), D144, A152, 155–160 (SAYNLS), and Q216.

The protein belongs to the NAD kinase family. The cofactor is a divalent metal cation.

The protein localises to the cytoplasm. It carries out the reaction NAD(+) + ATP = ADP + NADP(+) + H(+). Its function is as follows. Involved in the regulation of the intracellular balance of NAD and NADP, and is a key enzyme in the biosynthesis of NADP. Catalyzes specifically the phosphorylation on 2'-hydroxyl of the adenosine moiety of NAD to yield NADP. The protein is NAD kinase of Rickettsia typhi (strain ATCC VR-144 / Wilmington).